The chain runs to 321 residues: MPVKVIEGLPAIDDLRADNIFVMNDERAKNQNIRPLNLLVVNLMPRKLITERQILRLLSNTPLQINVEFLYMTSHDFKNTKQGHLDSFYKSFSEIKSQYYDGLIVTGAPVEQLNFEEVDYWSELLKIIDWSKSHVYSSLHICWGAQAALYARYGVTKENLPQKLCGIYKSSVEQPKNPLFRGFDDFFNYPQSRYTQSNPSEIKKVPDLEVLSSSKETGFSILAKKNLREIYLFGHLEYDRETLAWEYERDKEEGLKPNLPQNYFPENDDKNKPKSTWASAASLFFSNWLNYAVYQGTPYLGERLSQHLNEENYDFNQKEQK.

The active-site Acyl-thioester intermediate is the cysteine 142. Lysine 163 and serine 192 together coordinate substrate. The Proton acceptor role is filled by histidine 235. Residue glutamate 237 is part of the active site. Arginine 249 contributes to the substrate binding site.

The protein belongs to the MetA family.

The protein resides in the cytoplasm. It catalyses the reaction L-homoserine + acetyl-CoA = O-acetyl-L-homoserine + CoA. The protein operates within amino-acid biosynthesis; L-methionine biosynthesis via de novo pathway; O-acetyl-L-homoserine from L-homoserine: step 1/1. Its function is as follows. Transfers an acetyl group from acetyl-CoA to L-homoserine, forming acetyl-L-homoserine. The chain is Homoserine O-acetyltransferase from Lactococcus lactis subsp. lactis (strain IL1403) (Streptococcus lactis).